Here is a 466-residue protein sequence, read N- to C-terminus: Uronate isomerase (466 aa).

Belongs to the metallo-dependent hydrolases superfamily. Uronate isomerase family.

The catalysed reaction is D-glucuronate = D-fructuronate. The enzyme catalyses aldehydo-D-galacturonate = keto-D-tagaturonate. The protein operates within carbohydrate metabolism; pentose and glucuronate interconversion. The polypeptide is Uronate isomerase (Caldanaerobacter subterraneus subsp. tengcongensis (strain DSM 15242 / JCM 11007 / NBRC 100824 / MB4) (Thermoanaerobacter tengcongensis)).